The sequence spans 154 residues: Bacterial ferritin (154 aa).

Residues 1–145 enclose the Ferritin-like diiron domain; that stretch reads MQGHPEVIDY…QQLGLIARMG (145 aa). Fe(3+)-binding residues include Glu18, His46, Glu47, Glu50, Glu51, His54, Glu93, Asp129, and His130.

The protein belongs to the bacterioferritin family. As to quaternary structure, the bacterioferritin (BFR) complex is formed of 24 subunits (FtnA and BfrB) arranged as 12 homodimers. The holocomplex contains about 8.7% Fe and 8.0% phosphate. In vivo purifies with BfrB in varying ratios, depending on the O(2) content; as O(2) decreases FtnA content rises. Pure FtnA BFR complexes are not isolated in situ, although in a bfrB deletion some iron will accumulate in FtnA ferritin complexes. Upon crystallization forms homooligomers of 24 subunits, the BFR complex, arranged as 12 dimers, that are packed together to form an approximately spherical molecule with a central cavity, in which large amounts of iron can be deposited. The BFR shell has three- and four-fold pores; Fe(2+) may move in and out of the shell via the four-fold pores. Does not interact with Bfd.

The protein localises to the cytoplasm. The enzyme catalyses 4 Fe(2+) + O2 + 4 H(+) = 4 Fe(3+) + 2 H2O. It carries out the reaction Fe(2+)(in) = Fe(2+)(out). Functionally, plays a role in catalase A (katA) expression; activity is required for optimal KatA activity and resistance to H(2)O(2). Iron-storage protein that is part of the heterooligomeric bacterioferritin (BFR) complex. The ferroxidase center binds Fe(2+), oxidizes it using dioxygen to Fe(3+), and participates in subsequent Fe(3+) oxide mineral core formation within the central cavity of the BFR protein shell. Can store up to 520 iron atoms per ferritin protein molecule. Iron release requires only the input of electrons from ferredoxin NADP reductase (FPR), does not require Bfd. Does not bind heme. This Pseudomonas aeruginosa (strain ATCC 15692 / DSM 22644 / CIP 104116 / JCM 14847 / LMG 12228 / 1C / PRS 101 / PAO1) protein is Bacterial ferritin.